The sequence spans 1099 residues: Transmembrane protein 132C (1099 aa).

The N-terminal stretch at 1-31 (MRSEGAAPRRAARYGALSLVLATLLGQVTES) is a signal peptide. Over 32–915 (RGVMDNIQRF…LMQTAHGLSD (884 aa)) the chain is Extracellular. N-linked (GlcNAc...) asparagine glycosylation occurs at N95. Residues 237–260 (GDCTGGDTRKDNAIRPGKDGQEGR) form a disordered region. N-linked (GlcNAc...) asparagine glycosylation is found at N314 and N371. The tract at residues 801–872 (DADSSQTGEK…NNVGKSGRRD (72 aa)) is disordered. Residues 813–849 (EEIKNHASDRRQKIQDLERPGQDELYHGNFPGDREEG) are compositionally biased toward basic and acidic residues. A helical membrane pass occupies residues 916–936 (LEIGMYALLGVFCLAILVFLI). The Cytoplasmic segment spans residues 937–1099 (NCATFAFKYR…TYLEKFQDSV (163 aa)). Positions 1002-1045 (NHLLLNGGSQKPTQSQVHRPPGSGGRQTREPRQEPANSPTSKMK) are disordered. Polar residues predominate over residues 1008 to 1018 (GGSQKPTQSQV).

The protein belongs to the TMEM132 family.

The protein resides in the membrane. This chain is Transmembrane protein 132C (Tmem132c), found in Mus musculus (Mouse).